The primary structure comprises 255 residues: Small ribosomal subunit protein uS2 (255 aa).

The segment at 232-255 (ASGRDLGASEEVPVEPALEEASEA) is disordered.

This sequence belongs to the universal ribosomal protein uS2 family.

This Sinorhizobium medicae (strain WSM419) (Ensifer medicae) protein is Small ribosomal subunit protein uS2.